A 353-amino-acid chain; its full sequence is Photosystem II protein D1 (353 aa).

Thr-2 is modified (N-acetylthreonine). A Phosphothreonine modification is found at Thr-2. A run of 3 helical transmembrane segments spans residues Tyr-29–Ser-46, His-118–Leu-133, and Trp-142–Ala-156. Residue His-118 participates in chlorophyll a binding. Tyr-126 is a pheophytin a binding site. [CaMn4O5] cluster is bound by residues Asp-170 and Glu-189. The helical transmembrane segment at Phe-197–Leu-218 threads the bilayer. His-198 is a chlorophyll a binding site. Residues His-215 and Ser-264–Phe-265 each bind a quinone. His-215 contributes to the Fe cation binding site. His-272 serves as a coordination point for Fe cation. A helical membrane pass occupies residues Phe-274–Leu-288. Residues His-332, Glu-333, Asp-342, and Ala-344 each coordinate [CaMn4O5] cluster. Residues Ala-345 to Gly-353 constitute a propeptide that is removed on maturation.

Belongs to the reaction center PufL/M/PsbA/D family. PSII is composed of 1 copy each of membrane proteins PsbA, PsbB, PsbC, PsbD, PsbE, PsbF, PsbH, PsbI, PsbJ, PsbK, PsbL, PsbM, PsbT, PsbX, PsbY, PsbZ, Psb30/Ycf12, at least 3 peripheral proteins of the oxygen-evolving complex and a large number of cofactors. It forms dimeric complexes. It depends on The D1/D2 heterodimer binds P680, chlorophylls that are the primary electron donor of PSII, and subsequent electron acceptors. It shares a non-heme iron and each subunit binds pheophytin, quinone, additional chlorophylls, carotenoids and lipids. D1 provides most of the ligands for the Mn4-Ca-O5 cluster of the oxygen-evolving complex (OEC). There is also a Cl(-1) ion associated with D1 and D2, which is required for oxygen evolution. The PSII complex binds additional chlorophylls, carotenoids and specific lipids. as a cofactor. Post-translationally, tyr-161 forms a radical intermediate that is referred to as redox-active TyrZ, YZ or Y-Z. C-terminally processed by CTPA; processing is essential to allow assembly of the oxygen-evolving complex and thus photosynthetic growth.

The protein localises to the plastid. The protein resides in the chloroplast thylakoid membrane. The catalysed reaction is 2 a plastoquinone + 4 hnu + 2 H2O = 2 a plastoquinol + O2. Photosystem II (PSII) is a light-driven water:plastoquinone oxidoreductase that uses light energy to abstract electrons from H(2)O, generating O(2) and a proton gradient subsequently used for ATP formation. It consists of a core antenna complex that captures photons, and an electron transfer chain that converts photonic excitation into a charge separation. The D1/D2 (PsbA/PsbD) reaction center heterodimer binds P680, the primary electron donor of PSII as well as several subsequent electron acceptors. The polypeptide is Photosystem II protein D1 (Chloranthus spicatus (Chulantree)).